Reading from the N-terminus, the 107-residue chain is Dispanin subfamily A member 2b (107 aa).

At 1-31 (MEYRTDQVPMSPRSVQGAPGTLPIRDHLPWS) the chain is on the extracellular side. The helical transmembrane segment at 32 to 52 (IFNLFYMNVCCLGLTAMIFSV) threads the bilayer. S-palmitoyl cysteine attachment occurs at residues Cys-41 and Cys-42. Topologically, residues 53 to 77 (KSRDRKVVGDVEGARHYGSTARSLN) are cytoplasmic. The helical transmembrane segment at 78-98 (IAATVLGILLIIILIGLAATG) threads the bilayer. Over 99–107 (TIQALKYKG) the chain is Extracellular.

It belongs to the CD225/Dispanin family. Expressed various cell types in torpedo electric organ and muscle, especially fibroblasts, capillary endothelial cells, and axonal cuff cells.

The protein resides in the cell membrane. In Torpedo marmorata (Marbled electric ray), this protein is Dispanin subfamily A member 2b.